A 446-amino-acid chain; its full sequence is Xanthone prenyltransferase A (446 aa).

Dimethylallyl diphosphate-binding residues include Arg-113, Lys-199, Tyr-201, Arg-263, Lys-265, Tyr-267, Tyr-369, and Tyr-440.

Belongs to the tryptophan dimethylallyltransferase family.

It participates in secondary metabolite biosynthesis. Its function is as follows. Xanthone prenyltransferase involved in the conversion of monodictyphenone to the prenyl xanthones such as emericellin, shamixanthone and epishamixanthone. Monodictyphenone is first converted to variecoxanthone A via a paeciloxanthone intermediate by the consecutive actions of the FAD-dependent monooxygenase mdpD and the xanthone prenyltransferase xptB. XptB catalyzes regular O-prenylation at the hydroxy group of C-7 of the xanthone ring. Variecoxanthone A is further prenylated to emericellin by xptA before being reduced to shamixanthone and epishamixanthone by the dehydrogenase xptC. In Emericella nidulans (strain FGSC A4 / ATCC 38163 / CBS 112.46 / NRRL 194 / M139) (Aspergillus nidulans), this protein is Xanthone prenyltransferase A.